The following is a 223-amino-acid chain: MAAAGGGAAAAAGRAYSFKVVLLGEGCVGKTSLVLRYCENKFNDKHITTLQASFLTKKLNIGGKRVNLAIWDTAGQERFHALGPIYYRDSNGAILVYDVTDEDSFQKVKNWVKELRKMLGNEICLCIVGNKIDLEKERHVSIQEAESYAESVGAKHYHTSAKQNKGIEELFLDLCKRMIETAQVDERAKGNGSSQAGAARRGVQIIDDEPQAQSGSGGCCSSG.

A2 bears the N-acetylalanine mark. Residues G26, G29, K30, T31, S32, N43, D44, H46, T48, and T49 each coordinate GTP. Residue T31 coordinates Mg(2+). The Switch 1 motif lies at 41–54 (KFNDKHITTLQASF). Mg(2+) is bound by residues T49 and D72. Positions 74–92 (AGQERFHALGPIYYRDSNG) match the Switch 2 motif. G75, N130, K131, D133, A161, and K162 together coordinate GTP. S-geranylgeranyl cysteine attachment occurs at residues C219 and C220. The residue at position 220 (C220) is a Cysteine methyl ester. The propeptide at 221–223 (SSG) is removed in mature form.

It belongs to the small GTPase superfamily. Rab family. In terms of assembly, interacts with the cytoplasmic tail of integrins ITGA1, ITGA2, ITGA5, ITGA6, ITGA11 and ITGB1; this interaction is dependent upon its GDP/GTP cycle. Interacts with RABGEF1 (via VPS9 domain). Interacts with ANKRD27. Interacts (in GTP-bound form) with VAMP8 in response to starvation; the interaction probably regulates VAMP8 endolysosomal trafficking. Interacts (active GTP-bound form) with TMED10; the interaction is indirect and regulates TMED10 abundance and localization at the Golgi. It depends on Mg(2+) as a cofactor.

It is found in the endoplasmic reticulum membrane. Its subcellular location is the golgi apparatus. It localises to the trans-Golgi network. The protein resides in the golgi apparatus membrane. The protein localises to the early endosome membrane. It is found in the cytoplasmic vesicle membrane. Its subcellular location is the cleavage furrow. It localises to the cell projection. The protein resides in the neuron projection. It catalyses the reaction GTP + H2O = GDP + phosphate + H(+). Its activity is regulated as follows. Regulated by guanine nucleotide exchange factors (GEFs) including ANKRD27 and RABGEF1, which promote the exchange of bound GDP for free GTP. Regulated by GTPase activating proteins (GAPs) which increase the GTP hydrolysis activity. Inhibited by GDP dissociation inhibitors (GDIs). In terms of biological role, the small GTPases Rab are key regulators of intracellular membrane trafficking, from the formation of transport vesicles to their fusion with membranes. Rabs cycle between an inactive GDP-bound form and an active GTP-bound form that is able to recruit to membranes different sets of downstream effectors directly responsible for vesicle formation, movement, tethering and fusion. RAB21 is involved in membrane trafficking control. Regulates integrin internalization and recycling, but does not influence the traffic of endosomally translocated receptors in general. As a result, may regulate cell adhesion and migration. During the mitosis of adherent cells, controls the endosomal trafficking of integrins which is required for the successful completion of cytokinesis. Involved in neurite growth. Following SBF2/MTMT13-mediated activation in response to starvation-induced autophagy, binds to and regulates SNARE protein VAMP8 endolysosomal transport required for SNARE-mediated autophagosome-lysosome fusion. Modulates protein levels of the cargo receptors TMED2 and TMED10, and required for appropriate Golgi localization of TMED10. The sequence is that of Ras-related protein Rab-21 from Rattus norvegicus (Rat).